The primary structure comprises 182 residues: Large ribosomal subunit protein uL6 (182 aa).

This sequence belongs to the universal ribosomal protein uL6 family. Part of the 50S ribosomal subunit.

This protein binds to the 23S rRNA, and is important in its secondary structure. It is located near the subunit interface in the base of the L7/L12 stalk, and near the tRNA binding site of the peptidyltransferase center. This is Large ribosomal subunit protein uL6 from Desulforamulus reducens (strain ATCC BAA-1160 / DSM 100696 / MI-1) (Desulfotomaculum reducens).